The primary structure comprises 254 residues: N-acetylglucosamine-induced protein 1 (254 aa).

It localises to the cytoplasm. Its function is as follows. N-acetylglucosamine-induced protein which plays a role in the N-acetylglucosamine metabolic pathway. This is N-acetylglucosamine-induced protein 1 from Candida albicans (strain SC5314 / ATCC MYA-2876) (Yeast).